We begin with the raw amino-acid sequence, 401 residues long: Cysteine desulfurase CsdA (401 aa).

Lys222 carries the post-translational modification N6-(pyridoxal phosphate)lysine. Cys358 (cysteine persulfide intermediate) is an active-site residue.

The protein belongs to the class-V pyridoxal-phosphate-dependent aminotransferase family. Csd subfamily. In terms of assembly, homodimer. Forms a heterodimer with CsdE. The cofactor is pyridoxal 5'-phosphate.

The enzyme catalyses (sulfur carrier)-H + L-cysteine = (sulfur carrier)-SH + L-alanine. It carries out the reaction L-selenocysteine + AH2 = hydrogenselenide + L-alanine + A + H(+). The catalysed reaction is 3-sulfino-L-alanine + H2O = sulfite + L-alanine + H(+). With respect to regulation, cysteine desulfurase activity is increased 2-fold in the presence of CsdE. Its function is as follows. Catalyzes the removal of elemental sulfur and selenium atoms from L-cysteine, L-cystine, L-selenocysteine, and L-selenocystine to produce L-alanine, and transiently retains the released sulfur atom on a cysteine residue, in the form of a persulfide. Can also desulfinate L-cysteine sulfinate (3-sulfino-L-alanine), which is the best substrate of the enzyme. Functions as a selenium delivery protein in the pathway for the biosynthesis of selenophosphate. Seems to participate in Fe/S biogenesis by recruiting the SufBCD-SufE proteins. Transfers sulfur to CsdE that increases the cysteine desulfurase activity of CsdA. Can also transfer sulfur directly to TcdA/CsdL in vitro. Appears to support the function of TcdA in the generation of cyclic threonylcarbamoyladenosine at position 37 (ct(6)A37) in tRNAs that read codons beginning with adenine. The protein is Cysteine desulfurase CsdA (csdA) of Escherichia coli (strain K12).